We begin with the raw amino-acid sequence, 321 residues long: Transmembrane protein fend (321 aa).

The signal sequence occupies residues 1–18; sequence MFHSLVLMACALAALSVA. Residues 19 to 261 are Extracellular-facing; that stretch reads QGAGSARSKS…ALPTPSELGG (243 aa). The helical transmembrane segment at 262 to 282 threads the bilayer; that stretch reads VVYPAFGALAFFLALLVMFLF. Topologically, residues 283 to 321 are cytoplasmic; that stretch reads LRPQRKRFPLDADSADTATLIGRSSSSSRNSMDASTLHV.

The protein resides in the membrane. Functionally, involved in the normal targeting of ventral muscle, muscle 12, by motoneurons. May function as an axon guidance molecule involved in neuromuscular specificity. This is Transmembrane protein fend (fend) from Drosophila melanogaster (Fruit fly).